The sequence spans 204 residues: Pantothenate transporter PanT (204 aa).

The next 6 helical transmembrane spans lie at 18-38 (IILL…AVIV), 39-59 (GAQP…LGAR), 63-83 (FIGG…PGSI), 86-106 (LMFQ…LIIG), 123-143 (LGLG…VVLL), and 176-196 (IFEI…LVPI).

In terms of assembly, in E.coli forms a stable energy-coupling factor (ECF) transporter complex probably composed of a membrane-embedded substrate-binding protein (S component), two ATP-binding proteins (A components) and a transmembrane protein (T component).

It localises to the cell membrane. Functionally, probable pantothenate-binding protein that interacts with the energy-coupling factor (ECF) ABC-transporter complex. Unlike classic ABC transporters this ECF transporter provides the energy necessary to transport a number of different substrates. The substrates themselves are bound by transmembrane, not extracytoplasmic soluble proteins and transport it into cells. Upon coexpression with its energy-coupling factor (ECF) ABC-transporter complex EcfA1A2T in E.coli allows pantothenate uptake; uptake requires both PanT and EcfA1A2T. The polypeptide is Pantothenate transporter PanT (panT) (Leuconostoc mesenteroides subsp. mesenteroides (strain ATCC 8293 / DSM 20343 / BCRC 11652 / CCM 1803 / JCM 6124 / NCDO 523 / NBRC 100496 / NCIMB 8023 / NCTC 12954 / NRRL B-1118 / 37Y)).